The following is a 132-amino-acid chain: Large ribosomal subunit protein uL14 (132 aa).

Belongs to the universal ribosomal protein uL14 family. As to quaternary structure, part of the 50S ribosomal subunit. Forms a cluster with proteins L3 and L24e, part of which may contact the 16S rRNA in 2 intersubunit bridges.

Its function is as follows. Binds to 23S rRNA. Forms part of two intersubunit bridges in the 70S ribosome. The chain is Large ribosomal subunit protein uL14 from Methanocaldococcus jannaschii (strain ATCC 43067 / DSM 2661 / JAL-1 / JCM 10045 / NBRC 100440) (Methanococcus jannaschii).